A 601-amino-acid polypeptide reads, in one-letter code: NADH-ubiquinone oxidoreductase chain 5 (601 aa).

Helical transmembrane passes span 5–25 (ITSL…TLSF), 37–54 (YMRN…IYID), 83–105 (YCLT…SLWY), 112–129 (TLFF…LFFL), 134–156 (LLQL…NWWH), 169–189 (IIYN…SALF), 209–231 (WLPL…LHPW), 240–260 (TPVS…FLLI), 271–291 (MIIS…ALCA), 300–320 (IIAF…GINQ), 323–343 (LAFL…LCSA), 363–383 (LILP…MGMP), 400–420 (MSYV…LTSI), 451–471 (PLIR…TFFL), 478–498 (FSIP…VSSL), 508–528 (FSHM…AIFH), and 581–601 (NYIT…ALYF).

This sequence belongs to the complex I subunit 5 family.

Its subcellular location is the mitochondrion inner membrane. The catalysed reaction is a ubiquinone + NADH + 5 H(+)(in) = a ubiquinol + NAD(+) + 4 H(+)(out). Its function is as follows. Core subunit of the mitochondrial membrane respiratory chain NADH dehydrogenase (Complex I) that is believed to belong to the minimal assembly required for catalysis. Complex I functions in the transfer of electrons from NADH to the respiratory chain. The immediate electron acceptor for the enzyme is believed to be ubiquinone. The chain is NADH-ubiquinone oxidoreductase chain 5 (MT-ND5) from Myxine glutinosa (Atlantic hagfish).